The following is a 328-amino-acid chain: Urokinase plasminogen activator surface receptor (328 aa).

The signal sequence occupies residues 1 to 24; sequence MGLLRRRLLLLVVVVTTCVPASQG. 3 UPAR/Ly6 domains span residues 25–118, 118–213, and 214–299; these read LRCI…GRYL, LECA…PPNG, and FQCY…RPTG. Intrachain disulfides connect Cys-27/Cys-48, Cys-30/Cys-36, and Cys-41/Cys-69. Asn-76 is a glycosylation site (N-linked (GlcNAc...) asparagine). Disulfide bonds link Cys-95–Cys-100, Cys-120–Cys-147, Cys-123–Cys-130, Cys-140–Cys-169, Cys-175–Cys-192, Cys-193–Cys-198, Cys-216–Cys-244, Cys-219–Cys-227, Cys-237–Cys-263, Cys-269–Cys-288, and Cys-289–Cys-294. N-linked (GlcNAc...) asparagine glycosylation is found at Asn-184, Asn-194, Asn-222, Asn-255, Asn-283, and Asn-290. Gly-299 carries the GPI-anchor amidated glycine lipid modification. A propeptide spans 300–328 (removed in mature form); that stretch reads GAPGPGPAHLILIASLLLTLRLWGIPLWT.

As to quaternary structure, monomer. Interacts (via the UPAR/Ly6 domains) with SRPX2. Interacts with MRC2. Interacts with SORL1 (via N-terminal ectodomain); this interaction decreases PLAUR internalization. The ternary complex composed of PLAUR-PLAU-SERPINE1 also interacts with SORL1. Interacts with CD82; this interaction prevents PLAUR from binding to its high affinity ligand PLAU.

The protein resides in the cell membrane. It localises to the secreted. Functionally, acts as a receptor for urokinase plasminogen activator. Plays a role in localizing and promoting plasmin formation. Mediates the proteolysis-independent signal transduction activation effects of U-PA. The sequence is that of Urokinase plasminogen activator surface receptor (Plaur) from Rattus norvegicus (Rat).